Consider the following 510-residue polypeptide: uncharacterized protein (510 aa).

The Lumenal portion of the chain corresponds to 1-89 (MTSSLDDIEP…QGQRKKVLLK (89 aa)). The tract at residues 38–76 (AVSQGVPDMDGQTTDSSKDPEPNSEDKKAFPPSSGSFFS) is disordered. Residues 53–66 (SSKDPEPNSEDKKA) show a composition bias toward basic and acidic residues. The segment covering 67 to 76 (FPPSSGSFFS) has biased composition (low complexity). A helical transmembrane segment spans residues 90–110 (FVFTNCLLAIICFTMFVLFWG). At 111–123 (ALYDTSKYLHKVK) the chain is on the cytoplasmic side. Residues 124–144 (LLVVIQEPPVVILDNNSSMVV) traverse the membrane as a helical segment. At 145–312 (PSISYALPTF…TDRILLAPTQ (168 aa)) the chain is on the lumenal side. A helical membrane pass occupies residues 313-333 (IGVVYCLLLTFFQFLLYGPLH). Residues 334 to 349 (VEMAKVLRPANGLIYR) lie on the Cytoplasmic side of the membrane. The helical transmembrane segment at 350 to 370 (IAMSWFTFFFASLFFCTTTAI) threads the bilayer. The Lumenal portion of the chain corresponds to 371–381 (FQVDFTKSFGR). Residues 382 to 402 (GGFVVYWMSTWLFMLAAGGAN) form a helical membrane-spanning segment. Topologically, residues 403-416 (ENAVMLVITLGPQY) are cytoplasmic. The helical transmembrane segment at 417 to 437 (LGFWILSFVILNIAPSFFPLA) threads the bilayer. Topologically, residues 438-474 (LNNNVYRYGYMMPVHNVIDIYRVIFFDVTRRKMGRNY) are lumenal. The chain crosses the membrane as a helical span at residues 475 to 495 (GILVALIALNTALLPFVGKYA). The Cytoplasmic segment spans residues 496–510 (SRKLKQKALVAAKQS).

To yeast SNG1.

It is found in the endoplasmic reticulum membrane. This is an uncharacterized protein from Saccharomyces cerevisiae (strain ATCC 204508 / S288c) (Baker's yeast).